Reading from the N-terminus, the 71-residue chain is Pre-hexon-linking protein VIII (71 aa).

The protein belongs to the adenoviridae hexon-linking protein family. Interacts with the peripentonal hexons as well as the hexons in the facets. Part of a complex composed of the core-capsid bridging protein, the endosome lysis protein VI and the hexon-linking protein VIII; these interactions bridge the virus core to the capsid. Cleaved by the viral protease during virion maturation. May cause the middle segment to be shed from the capsid.

Its subcellular location is the host nucleus. The protein localises to the virion. In terms of biological role, structural component of the virion that acts as a cement protein on the capsid interior and which glue the peripentonal hexons and group-of-nine hexons together. This chain is Pre-hexon-linking protein VIII, found in Canine adenovirus serotype 1 (strain Glaxo) (CAdV-1).